Reading from the N-terminus, the 385-residue chain is Linearmycin resistance permease protein LnrN (385 aa).

The next 6 helical transmembrane spans lie at 22 to 42, 198 to 218, 239 to 259, 274 to 294, 305 to 325, and 360 to 380; these read YLIM…MLSG, AAGF…GTIL, IGAG…GILL, AAVI…GLMI, LAFG…YWPI, and DILG…AAGL. Residues 163–382 enclose the ABC transmembrane type-2 domain; that stretch reads KTVFAKKHED…AITFAAGLKA (220 aa).

This sequence belongs to the ABC-2 integral membrane protein family. As to quaternary structure, the complex is composed of two ATP-binding proteins (LnrL) and two transmembrane proteins (LnrM and LnrN).

The protein resides in the cell membrane. In terms of biological role, required for resistance to linearmycins, a family of antibiotic-specialized metabolites produced by some streptomycetes. Part of the ABC transporter complex LnrLMN that probably facilitates linearmycin removal from the membrane. Responsible for the translocation of the substrate across the membrane. Also mediates KinC-dependent biofilm morphology. The sequence is that of Linearmycin resistance permease protein LnrN from Bacillus subtilis (strain 168).